The following is a 381-amino-acid chain: Pyrimidine monooxygenase RutA (381 aa).

Residues 66–67, Asn-132, Glu-141, 157–158, and Ser-207 each bind FMN; these read IK and RY.

Belongs to the NtaA/SnaA/DszA monooxygenase family. RutA subfamily.

The catalysed reaction is uracil + FMNH2 + NADH + O2 = (Z)-3-ureidoacrylate + FMN + NAD(+) + H2O + H(+). It carries out the reaction thymine + FMNH2 + NADH + O2 = (Z)-2-methylureidoacrylate + FMN + NAD(+) + H2O + H(+). Its function is as follows. Catalyzes the pyrimidine ring opening between N-3 and C-4 by an unusual flavin hydroperoxide-catalyzed mechanism, adding oxygen atoms in the process to yield ureidoacrylate peracid, that immediately reacts with FMN forming ureidoacrylate and FMN-N(5)-oxide. The FMN-N(5)-oxide reacts spontaneously with NADH to produce FMN. Requires the flavin reductase RutF to regenerate FMN in vivo. In Methylobacterium radiotolerans (strain ATCC 27329 / DSM 1819 / JCM 2831 / NBRC 15690 / NCIMB 10815 / 0-1), this protein is Pyrimidine monooxygenase RutA.